The sequence spans 257 residues: Cytochrome b561 domain-containing protein At2g30890 (257 aa).

Residues 1-21 form the signal peptide; that stretch reads MEIHHQLLVSLLFLLLPLCSS. The Cytochrome b561 domain maps to 22 to 219; sequence QENTRSLAID…LFQDKWSYIQ (198 aa). 5 helical membrane-spanning segments follow: residues 55–75, 91–111, 125–145, 157–177, and 191–211; these read VHGF…IISI, LFFL…IGAV, HQQL…LGFL, WFVG…INIY, and ANLW…VYLF. Heme b is bound by residues H56, H95, H125, and H161. Residues 235–257 are disordered; the sequence is NISTAETGHGYEVEESKPELEKC. Residues 243-257 show a composition bias toward basic and acidic residues; the sequence is HGYEVEESKPELEKC.

Heme b serves as cofactor.

Its subcellular location is the membrane. This Arabidopsis thaliana (Mouse-ear cress) protein is Cytochrome b561 domain-containing protein At2g30890.